The sequence spans 527 residues: MAMRFFQLHRNRLVKGNSGKALSFSRLLDLSFWVRAFCNYREILRNGLHSLQFNEALDLFTHMVESRPLPSIIDFTKLLNVIAKMKKFDVVINLCDHLQIMGVSHDLYTCNLLMNCFCQSSQPYLASSFLGKMMKLGFEPDIVTFTSLINGFCLGNRMEEAMSMVNQMVEMGIKPDVVMYTTIIDSLCKNGHVNYALSLFDQMENYGIRPDVVMYTSLVNGLCNSGRWRDADSLLRGMTKRKIKPDVITFNALIDAFVKEGKFLDAEELYNEMIRMSIAPNIFTYTSLINGFCMEGCVDEARQMFYLMETKGCFPDVVAYTSLINGFCKCKKVDDAMKIFYEMSQKGLTGNTITYTTLIQGFGQVGKPNVAQEVFSHMVSRGVPPNIRTYNVLLHCLCYNGKVKKALMIFEDMQKREMDGVAPNIWTYNVLLHGLCYNGKLEKALMVFEDMRKREMDIGIITYTIIIQGMCKAGKVKNAVNLFCSLPSKGVKPNVVTYTTMISGLFREGLKHEAHVLFRKMKEDGVS.

A mitochondrion-targeting transit peptide spans 1 to 35 (MAMRFFQLHRNRLVKGNSGKALSFSRLLDLSFWVR). 14 PPR repeats span residues 36-70 (AFCN…RPLP), 71-105 (SIID…GVSH), 106-140 (DLYT…GFEP), 141-175 (DIVT…GIKP), 176-210 (DVVM…GIRP), 211-245 (DVVM…KIKP), 246-280 (DVIT…SIAP), 281-315 (NIFT…GCFP), 316-350 (DVVA…GLTG), 351-385 (NTIT…GVPP), 386-420 (NIRT…EMDG), 424-458 (NIWT…EMDI), 459-493 (GIIT…GVKP), and 494-527 (NVVT…DGVS).

It belongs to the PPR family. P subfamily.

Its subcellular location is the mitochondrion. In Arabidopsis thaliana (Mouse-ear cress), this protein is Pentatricopeptide repeat-containing protein At5g41170, mitochondrial.